A 523-amino-acid polypeptide reads, in one-letter code: Glycine betaine transporter 1 (523 aa).

The next 12 helical transmembrane spans lie at valine 33 to alanine 53, phenylalanine 71 to valine 91, serine 109 to tryptophan 129, phenylalanine 165 to phenylalanine 185, isoleucine 214 to glycine 234, glycine 251 to valine 271, methionine 286 to glycine 306, tryptophan 337 to alanine 357, valine 372 to isoleucine 392, valine 420 to isoleucine 440, valine 467 to glutamate 487, and alanine 496 to methionine 516.

It belongs to the BCCT transporter (TC 2.A.15) family.

It localises to the cell inner membrane. Involved in the uptake of the osmoprotectant glycine betaine. The polypeptide is Glycine betaine transporter 1 (Vibrio parahaemolyticus serotype O3:K6 (strain RIMD 2210633)).